The sequence spans 548 residues: DNA ligase (548 aa).

An ATP-binding site is contributed by Glu-244. Residue Lys-246 is the N6-AMP-lysine intermediate of the active site. 6 residues coordinate ATP: Arg-251, Arg-266, Glu-295, Phe-334, Arg-405, and Lys-411.

It belongs to the ATP-dependent DNA ligase family. Mg(2+) is required as a cofactor.

The enzyme catalyses ATP + (deoxyribonucleotide)n-3'-hydroxyl + 5'-phospho-(deoxyribonucleotide)m = (deoxyribonucleotide)n+m + AMP + diphosphate.. DNA ligase that seals nicks in double-stranded DNA during DNA replication, DNA recombination and DNA repair. This chain is DNA ligase, found in Methanoculleus marisnigri (strain ATCC 35101 / DSM 1498 / JR1).